We begin with the raw amino-acid sequence, 141 residues long: ATP synthase F(0) complex subunit C2, mitochondrial (141 aa).

A mitochondrion-targeting transit peptide spans 1-66 (MYACSKFVST…RSFQTSAISR (66 aa)). A helical transmembrane segment spans residues 82-102 (VGVAGSGAGIGTVFGSLIIGY). N6,N6,N6-trimethyllysine is present on lysine 109. Residues 117–137 (ILGFALSEAMGLFCLMVAFLI) traverse the membrane as a helical segment.

The protein belongs to the ATPase C chain family. In terms of assembly, F-type ATPases have 2 components, CF(1) - the catalytic core - and CF(0) - the membrane proton channel. CF(1) has five subunits: alpha(3), beta(3), gamma(1), delta(1), epsilon(1). CF(0) has three main subunits: a, b and c. Interacts with DNAJC30; interaction is direct. Trimethylated by ATPSCKMT at Lys-109. Methylation is required for proper incorporation of the C subunit into the ATP synthase complex and mitochondrial respiration.

Its subcellular location is the mitochondrion membrane. Mitochondrial membrane ATP synthase (F(1)F(0) ATP synthase or Complex V) produces ATP from ADP in the presence of a proton gradient across the membrane which is generated by electron transport complexes of the respiratory chain. F-type ATPases consist of two structural domains, F(1) - containing the extramembraneous catalytic core and F(0) - containing the membrane proton channel, linked together by a central stalk and a peripheral stalk. During catalysis, ATP synthesis in the catalytic domain of F(1) is coupled via a rotary mechanism of the central stalk subunits to proton translocation. Part of the complex F(0) domain. A homomeric c-ring of probably 10 subunits is part of the complex rotary element. This chain is ATP synthase F(0) complex subunit C2, mitochondrial, found in Rattus norvegicus (Rat).